The chain runs to 879 residues: MAKVRVYELAKELNVESKTLLAKLHELGEFVRSASSTIEAPVVRKLREAFPPPPEPAAGNGSAAQPTAKPSAAKSTGKTTEPAADAAAPPAVTTPPSAAPAGATTSAPSDAGGEKIATPPRPVKLPQPPRPAPAVPKPPSGPPRMGNNPFTSPMPRPMPPRPVQRPTGTPGTPGIPRPPLRPGAPGRPTPGAMPPRPAAGRAAPGRGAPIRLPGGLGRAPAPPSAGRPGVGGRGRGAPGGAFGRGPGAKPSRPHKSKKQRRQEFDNLQAPVIGGIQIPRGNGQVVRLPRGASLADFADKIGANPASLVQVAFHLGEMVTATQSVNEETLQLLGAELGYEVQIVSPEDEDRELLESFDIELGTDQGDEAALVPRPPVVTVMGHVDHGKTKLLDAIRNTNVAAREHGGITQHIGAYQVTAQTADGPRQITFIDTPGHEAFTAMRARGAQVTDIAVLVVAADDGVMPQTVEALNHAKAADVPIVVAVNKIDKPGADPVKVRGQLTEYGLVAEEYGGDTMFVDVSALTGQGIDDLLEAILLTADAALDLRANPNQPAQGVAIEAHLDRGRGPVATVLVQRGTLRVGDSIVAGEAFGRVRAMLDEFGQPVEEAGPSRPVQVLGFTSVPDAGDTFLVVPEDRVARQIAERRAARERNAQLAASRRRRTLEDILERMEKGEVAELRLILKGDVSGSVEALEDALLKIDVGDEARIRVIDRGVGAITENNVMLAVASDAIIIGFNVRPEGKARELAEREGVDVRYYSVIYQAIEDVEAALKGLLKPVYEEVQLGTAEVREVFRSSKFGNIAGCLVRSGTITRGAKARVVRDGVVVANDVSIASLRRFKDDVTEVREGFECGVGLGSFNDIRVGDVIETYEMREKPRS.

Positions glutamate 48–arginine 261 are disordered. Positions proline 82–alanine 111 are enriched in low complexity. Pro residues-rich tracts occupy residues proline 119–proline 142, serine 152–valine 163, and proline 173–proline 197. The span at alanine 198 to proline 213 shows a compositional bias: low complexity. Residues proline 228–proline 246 are compositionally biased toward gly residues. The segment covering serine 251 to arginine 260 has biased composition (basic residues). Residues proline 372 to leucine 543 enclose the tr-type G domain. Positions glycine 381–threonine 388 are G1. Position 381–388 (glycine 381–threonine 388) interacts with GTP. The tract at residues glycine 406–histidine 410 is G2. The tract at residues aspartate 431–glycine 434 is G3. GTP is bound by residues aspartate 431–histidine 435 and asparagine 485–aspartate 488. A G4 region spans residues asparagine 485 to aspartate 488. The G5 stretch occupies residues serine 521 to leucine 523.

It belongs to the TRAFAC class translation factor GTPase superfamily. Classic translation factor GTPase family. IF-2 subfamily.

It is found in the cytoplasm. In terms of biological role, one of the essential components for the initiation of protein synthesis. Protects formylmethionyl-tRNA from spontaneous hydrolysis and promotes its binding to the 30S ribosomal subunits. Also involved in the hydrolysis of GTP during the formation of the 70S ribosomal complex. This is Translation initiation factor IF-2 from Acidothermus cellulolyticus (strain ATCC 43068 / DSM 8971 / 11B).